We begin with the raw amino-acid sequence, 636 residues long: tRNA uridine 5-carboxymethylaminomethyl modification enzyme MnmG (636 aa).

FAD is bound at residue 18 to 23 (GAGHAG). 281 to 295 (GPRYCPSIEDKIVRF) lines the NAD(+) pocket.

The protein belongs to the MnmG family. As to quaternary structure, homodimer. Heterotetramer of two MnmE and two MnmG subunits. It depends on FAD as a cofactor.

Its subcellular location is the cytoplasm. NAD-binding protein involved in the addition of a carboxymethylaminomethyl (cmnm) group at the wobble position (U34) of certain tRNAs, forming tRNA-cmnm(5)s(2)U34. This is tRNA uridine 5-carboxymethylaminomethyl modification enzyme MnmG from Lactiplantibacillus plantarum (strain ATCC BAA-793 / NCIMB 8826 / WCFS1) (Lactobacillus plantarum).